The chain runs to 359 residues: Probable dual-specificity RNA methyltransferase RlmN (359 aa).

The Proton acceptor role is filled by glutamate 91. Residues 97–335 (QHYGHSVCVT…CVVRQEHGTD (239 aa)) enclose the Radical SAM core domain. A disulfide bond links cysteine 104 and cysteine 340. [4Fe-4S] cluster contacts are provided by cysteine 111, cysteine 115, and cysteine 118. S-adenosyl-L-methionine contacts are provided by residues 163–164 (GE), serine 195, 218–220 (SLH), and asparagine 296. The active-site S-methylcysteine intermediate is the cysteine 340.

Belongs to the radical SAM superfamily. RlmN family. [4Fe-4S] cluster serves as cofactor.

The protein resides in the cytoplasm. The catalysed reaction is adenosine(2503) in 23S rRNA + 2 reduced [2Fe-2S]-[ferredoxin] + 2 S-adenosyl-L-methionine = 2-methyladenosine(2503) in 23S rRNA + 5'-deoxyadenosine + L-methionine + 2 oxidized [2Fe-2S]-[ferredoxin] + S-adenosyl-L-homocysteine. The enzyme catalyses adenosine(37) in tRNA + 2 reduced [2Fe-2S]-[ferredoxin] + 2 S-adenosyl-L-methionine = 2-methyladenosine(37) in tRNA + 5'-deoxyadenosine + L-methionine + 2 oxidized [2Fe-2S]-[ferredoxin] + S-adenosyl-L-homocysteine. In terms of biological role, specifically methylates position 2 of adenine 2503 in 23S rRNA and position 2 of adenine 37 in tRNAs. The sequence is that of Probable dual-specificity RNA methyltransferase RlmN from Streptococcus pyogenes serotype M12 (strain MGAS2096).